Reading from the N-terminus, the 155-residue chain is HTH-type transcriptional repressor MdtR (155 aa).

The 137-residue stretch at 4–140 (ADQLMSDIQL…AAHITAKLAQ (137 aa)) folds into the HTH marR-type domain. Positions 54-77 (VSEIAERMEVKPSAVTLMADRLEQ) form a DNA-binding region, H-T-H motif.

As to quaternary structure, homodimer.

The protein localises to the cytoplasm. The binding of MdtR to the mdtRP promoter region is severely inhibited by adding excess concentrations of fusidic acid or novobiocin but not by actinomycin or streptomycin. Functionally, repressor of the multidrug resistance operon mdtRP. Acts by binding directly to the mdtRP promoter region, leading to the repression of its expression. The protein is HTH-type transcriptional repressor MdtR of Bacillus subtilis (strain 168).